A 434-amino-acid polypeptide reads, in one-letter code: Enolase (434 aa).

Q163 serves as a coordination point for (2R)-2-phosphoglycerate. E205 (proton donor) is an active-site residue. Mg(2+) is bound by residues D242, E291, and D318. (2R)-2-phosphoglycerate-binding residues include K343, R372, S373, and K394. Catalysis depends on K343, which acts as the Proton acceptor.

Belongs to the enolase family. It depends on Mg(2+) as a cofactor.

The protein localises to the cytoplasm. It localises to the secreted. Its subcellular location is the cell surface. It catalyses the reaction (2R)-2-phosphoglycerate = phosphoenolpyruvate + H2O. Its pathway is carbohydrate degradation; glycolysis; pyruvate from D-glyceraldehyde 3-phosphate: step 4/5. Catalyzes the reversible conversion of 2-phosphoglycerate (2-PG) into phosphoenolpyruvate (PEP). It is essential for the degradation of carbohydrates via glycolysis. The protein is Enolase of Streptococcus sanguinis (strain SK36).